Reading from the N-terminus, the 168-residue chain is ATP synthase subunit b (168 aa).

The helical transmembrane segment at 9–29 (AIPFGTIAYTLVVFLILLVML) threads the bilayer.

This sequence belongs to the ATPase B chain family. F-type ATPases have 2 components, F(1) - the catalytic core - and F(0) - the membrane proton channel. F(1) has five subunits: alpha(3), beta(3), gamma(1), delta(1), epsilon(1). F(0) has three main subunits: a(1), b(2) and c(10-14). The alpha and beta chains form an alternating ring which encloses part of the gamma chain. F(1) is attached to F(0) by a central stalk formed by the gamma and epsilon chains, while a peripheral stalk is formed by the delta and b chains.

Its subcellular location is the cell membrane. In terms of biological role, f(1)F(0) ATP synthase produces ATP from ADP in the presence of a proton or sodium gradient. F-type ATPases consist of two structural domains, F(1) containing the extramembraneous catalytic core and F(0) containing the membrane proton channel, linked together by a central stalk and a peripheral stalk. During catalysis, ATP synthesis in the catalytic domain of F(1) is coupled via a rotary mechanism of the central stalk subunits to proton translocation. Its function is as follows. Component of the F(0) channel, it forms part of the peripheral stalk, linking F(1) to F(0). The chain is ATP synthase subunit b from Bacillus cytotoxicus (strain DSM 22905 / CIP 110041 / 391-98 / NVH 391-98).